The chain runs to 476 residues: Probable G-protein coupled receptor No9 (476 aa).

Residues 1–36 (MEGPPLSPAPADNVTLNVSCGRPATLFDWADHRLIS) are Extracellular-facing. N-linked (GlcNAc...) asparagine glycosylation is found at N13 and N17. Residues 37–60 (LLALAFLNLMVVAGNLLVVMAVFV) traverse the membrane as a helical segment. Over 61–69 (HSKLRTVTN) the chain is Cytoplasmic. A helical membrane pass occupies residues 70–93 (LFIVSLACADLLVGMLVLPFSATL). Over 94 to 103 (EVLDVWLYGD) the chain is Extracellular. A helical transmembrane segment spans residues 104–127 (VWCSVWLAVDVWMCTSSILNLCAI). C106 and C192 are joined by a disulfide. The Cytoplasmic portion of the chain corresponds to 128–152 (SLDRYLAVSQPISYPSLMSTRRAKQ). A helical membrane pass occupies residues 153–172 (LIAAVWVLSFVICFPPLVGW). Residues 173–200 (NDRPGTLIGSRGSSACRLTCELTNERGY) lie on the Extracellular side of the membrane. A helical transmembrane segment spans residues 201 to 221 (VIYSALGSFFLPSTVMLFFYG). Over 222–375 (RIYRTAVSTT…FRMETKAAKT (154 aa)) the chain is Cytoplasmic. A compositionally biased stretch (low complexity) spans 266–278 (AAAGGARAHGQVR). Disordered regions lie at residues 266–293 (AAAG…NKPS) and 317–351 (DSRP…PRFI). A helical transmembrane segment spans residues 376–396 (VGIIVGLFILCWLPFFVCYLV). Residues 397–406 (RGFCADCVPP) are Extracellular-facing. The helical transmembrane segment at 407 to 430 (LLFSVFFWLGYCNSAVNPCVYALC) threads the bilayer. Residues 431–476 (SRDFRFAFSSILCKCVCRRGAMERRFRRTLLVGNRSQTEEDCEVAD) lie on the Cytoplasmic side of the membrane.

This sequence belongs to the G-protein coupled receptor 1 family.

Its subcellular location is the cell membrane. In terms of biological role, orphan G-protein coupled receptor. This is Probable G-protein coupled receptor No9 from Amphibalanus amphitrite (Striped barnacle).